Consider the following 457-residue polypeptide: tRNA modification GTPase MnmE (457 aa).

3 residues coordinate (6S)-5-formyl-5,6,7,8-tetrahydrofolate: Arg24, Glu81, and Lys124. The region spanning 220–379 is the TrmE-type G domain; it reads GIQLVLAGAP…LKQKILHVVG (160 aa). Asn230 serves as a coordination point for K(+). GTP contacts are provided by residues 230 to 235, 249 to 255, and 274 to 277; these read NVGKSS, TPIAGTT, and DTAG. Ser234 provides a ligand contact to Mg(2+). K(+) contacts are provided by Thr249, Ile251, and Thr254. Thr255 is a Mg(2+) binding site. Position 457 (Lys457) interacts with (6S)-5-formyl-5,6,7,8-tetrahydrofolate.

It belongs to the TRAFAC class TrmE-Era-EngA-EngB-Septin-like GTPase superfamily. TrmE GTPase family. As to quaternary structure, homodimer. Heterotetramer of two MnmE and two MnmG subunits. K(+) is required as a cofactor.

It localises to the cytoplasm. Its function is as follows. Exhibits a very high intrinsic GTPase hydrolysis rate. Involved in the addition of a carboxymethylaminomethyl (cmnm) group at the wobble position (U34) of certain tRNAs, forming tRNA-cmnm(5)s(2)U34. The protein is tRNA modification GTPase MnmE of Polynucleobacter asymbioticus (strain DSM 18221 / CIP 109841 / QLW-P1DMWA-1) (Polynucleobacter necessarius subsp. asymbioticus).